The following is a 110-amino-acid chain: UPF0102 protein HH_1751 (110 aa).

This sequence belongs to the UPF0102 family.

This Helicobacter hepaticus (strain ATCC 51449 / 3B1) protein is UPF0102 protein HH_1751.